A 76-amino-acid chain; its full sequence is Protein sprouty homolog 1 (76 aa).

In terms of domain architecture, SPR spans 1-52 (NPCSCSQSHCCSRYLCMGAMSLFLPCLLCYPPAKGCLKLCRGCYDRVNRPGC).

It belongs to the sprouty family. As to expression, brain and interlimb region.

It localises to the cytoplasm. It is found in the membrane. Inhibits fibroblast growth factor (FGF)-induced retinal lens fiber differentiation. Inhibits TGFB-induced epithelial-to-mesenchymal transition in lens epithelial cells. This is Protein sprouty homolog 1 (SPRY1) from Gallus gallus (Chicken).